The primary structure comprises 198 residues: Dual specificity protein phosphatase 14 (198 aa).

A Tyrosine-protein phosphatase domain is found at 26–167; that stretch reads GIAQITSSLF…LIDYESQLFG (142 aa). Residue C111 is the Phosphocysteine intermediate of the active site.

This sequence belongs to the protein-tyrosine phosphatase family. Non-receptor class dual specificity subfamily.

It carries out the reaction O-phospho-L-tyrosyl-[protein] + H2O = L-tyrosyl-[protein] + phosphate. It catalyses the reaction O-phospho-L-seryl-[protein] + H2O = L-seryl-[protein] + phosphate. The catalysed reaction is O-phospho-L-threonyl-[protein] + H2O = L-threonyl-[protein] + phosphate. In terms of biological role, involved in the inactivation of MAP kinases. Dephosphorylates ERK, JNK and p38 MAP-kinases. Plays a negative role in TCR signaling by dephosphorylating MAP3K7 adapter TAB1 leading to its inactivation. The polypeptide is Dual specificity protein phosphatase 14 (Dusp14) (Mus musculus (Mouse)).